The sequence spans 262 residues: Type III pantothenate kinase (262 aa).

12-19 contributes to the ATP binding site; it reads DIGNTSIA. Residues Y94 and 109–112 each bind substrate; that span reads GSDV. Residue D111 is the Proton acceptor of the active site. D132 contacts K(+). T135 contacts ATP. Position 187 (T187) interacts with substrate.

Belongs to the type III pantothenate kinase family. Homodimer. NH4(+) serves as cofactor. It depends on K(+) as a cofactor.

Its subcellular location is the cytoplasm. It catalyses the reaction (R)-pantothenate + ATP = (R)-4'-phosphopantothenate + ADP + H(+). It participates in cofactor biosynthesis; coenzyme A biosynthesis; CoA from (R)-pantothenate: step 1/5. In terms of biological role, catalyzes the phosphorylation of pantothenate (Pan), the first step in CoA biosynthesis. This is Type III pantothenate kinase from Borreliella burgdorferi (strain ATCC 35210 / DSM 4680 / CIP 102532 / B31) (Borrelia burgdorferi).